The chain runs to 138 residues: Nucleoside diphosphate kinase (138 aa).

Lys9, Phe57, Arg85, Thr91, Arg102, and Asn112 together coordinate ATP. Catalysis depends on His115, which acts as the Pros-phosphohistidine intermediate.

It belongs to the NDK family. Homotetramer. Mg(2+) is required as a cofactor.

Its subcellular location is the cytoplasm. It catalyses the reaction a 2'-deoxyribonucleoside 5'-diphosphate + ATP = a 2'-deoxyribonucleoside 5'-triphosphate + ADP. It carries out the reaction a ribonucleoside 5'-diphosphate + ATP = a ribonucleoside 5'-triphosphate + ADP. Its function is as follows. Major role in the synthesis of nucleoside triphosphates other than ATP. The ATP gamma phosphate is transferred to the NDP beta phosphate via a ping-pong mechanism, using a phosphorylated active-site intermediate. The protein is Nucleoside diphosphate kinase of Lawsonia intracellularis (strain PHE/MN1-00).